The sequence spans 454 residues: CBL-interacting protein kinase 17 (454 aa).

Residues Y13–F268 enclose the Protein kinase domain. ATP is bound by residues L19 to V27 and K42. D136 acts as the Proton acceptor in catalysis. Residues D154 to E183 are activation loop. Residues K304–E328 form the NAF domain. The tract at residues Q334–V363 is PPI.

The protein belongs to the protein kinase superfamily. CAMK Ser/Thr protein kinase family. SNF1 subfamily. It depends on Mn(2+) as a cofactor.

The enzyme catalyses L-seryl-[protein] + ATP = O-phospho-L-seryl-[protein] + ADP + H(+). It carries out the reaction L-threonyl-[protein] + ATP = O-phospho-L-threonyl-[protein] + ADP + H(+). CIPK serine-threonine protein kinases interact with CBL proteins. Binding of a CBL protein to the regulatory NAF domain of CIPK protein lead to the activation of the kinase in a calcium-dependent manner. The polypeptide is CBL-interacting protein kinase 17 (CIPK17) (Oryza sativa subsp. japonica (Rice)).